A 311-amino-acid chain; its full sequence is tRNA-cytidine(32) 2-sulfurtransferase (311 aa).

The PP-loop motif motif lies at 47–52 (SGGKDS). [4Fe-4S] cluster contacts are provided by C122, C125, and C213.

The protein belongs to the TtcA family. Homodimer. Mg(2+) is required as a cofactor. Requires [4Fe-4S] cluster as cofactor.

Its subcellular location is the cytoplasm. It catalyses the reaction cytidine(32) in tRNA + S-sulfanyl-L-cysteinyl-[cysteine desulfurase] + AH2 + ATP = 2-thiocytidine(32) in tRNA + L-cysteinyl-[cysteine desulfurase] + A + AMP + diphosphate + H(+). Its pathway is tRNA modification. In terms of biological role, catalyzes the ATP-dependent 2-thiolation of cytidine in position 32 of tRNA, to form 2-thiocytidine (s(2)C32). The sulfur atoms are provided by the cysteine/cysteine desulfurase (IscS) system. The sequence is that of tRNA-cytidine(32) 2-sulfurtransferase from Salmonella typhimurium (strain LT2 / SGSC1412 / ATCC 700720).